The sequence spans 440 residues: MNHIETRLPLPIQPIDRWLRPFARFLHIEATSGLVLILCTVVALVAANSSWADSYLAFWHTDLTIAVGDIVFHHSLHHVINDGLMAVFFFVIGLEVKRELAHGSLSDLKQATLPIAAAIGGMIVPATLYLSMQYGQPGVQGWGIPMATDIAFVVGCLAILGSRVPHSLRVLLLSLAIVDDIGAILVIAIGYTESLDGRYLFLAAVAVGAVHFLSRIGVRRFPPYVIVGVLAWIALHESGIHATLIGVILGLMTPATPTLVPERFREYLHEKEHEFQPKEWSRRLHRAEVVREVQQLTRETVSPLEYLEVTLHPWTAYVIMPVFALANAGVLIEPANLSDSVAIAVVIGLVVGKPLGIALFSWLVIRLGVARLPSGLNWPILMSGSFLAGIGFTMALFIDGLAFGADGLDTAKTGVLVGSAISAIAGMGLLLWTLPKPTRQ.

11 helical membrane-spanning segments follow: residues 25–45 (FLHI…VALV), 76–96 (LHHV…GLEV), 112–132 (TLPI…YLSM), 141–161 (GWGI…AILG), 170–190 (VLLL…IAIG), 194–214 (SLDG…HFLS), 225–245 (VIVG…ATLI), 312–332 (HPWT…GVLI), 345–365 (VVIG…WLVI), 378–398 (WPIL…ALFI), and 414–434 (GVLV…LWTL).

It belongs to the NhaA Na(+)/H(+) (TC 2.A.33) antiporter family.

It localises to the cell inner membrane. It carries out the reaction Na(+)(in) + 2 H(+)(out) = Na(+)(out) + 2 H(+)(in). Its function is as follows. Na(+)/H(+) antiporter that extrudes sodium in exchange for external protons. This chain is Na(+)/H(+) antiporter NhaA, found in Rhodopirellula baltica (strain DSM 10527 / NCIMB 13988 / SH1).